A 397-amino-acid chain; its full sequence is 1-deoxy-D-xylulose 5-phosphate reductoisomerase (397 aa).

Residues T10, G11, S12, I13, G36, N38, and N128 each contribute to the NADPH site. K129 contacts 1-deoxy-D-xylulose 5-phosphate. E130 contacts NADPH. Mn(2+) is bound at residue D154. The 1-deoxy-D-xylulose 5-phosphate site is built by S155, E156, S180, and H203. E156 provides a ligand contact to Mn(2+). G209 lines the NADPH pocket. Positions 221, 222, and 225 each coordinate 1-deoxy-D-xylulose 5-phosphate. E225 lines the Mn(2+) pocket.

The protein belongs to the DXR family. Mg(2+) serves as cofactor. Requires Mn(2+) as cofactor.

The catalysed reaction is 2-C-methyl-D-erythritol 4-phosphate + NADP(+) = 1-deoxy-D-xylulose 5-phosphate + NADPH + H(+). Its pathway is isoprenoid biosynthesis; isopentenyl diphosphate biosynthesis via DXP pathway; isopentenyl diphosphate from 1-deoxy-D-xylulose 5-phosphate: step 1/6. In terms of biological role, catalyzes the NADPH-dependent rearrangement and reduction of 1-deoxy-D-xylulose-5-phosphate (DXP) to 2-C-methyl-D-erythritol 4-phosphate (MEP). The sequence is that of 1-deoxy-D-xylulose 5-phosphate reductoisomerase from Solibacter usitatus (strain Ellin6076).